Here is a 500-residue protein sequence, read N- to C-terminus: MLSNARIIAAGCIAAGSLVAAGPCDIYSSGGTPCVAAHSTTRALFSAYTGPLYQVKRGSDGATTAISPLSSGVANAAAQDAFCAGTTCLITIIYDQSGRGNHLTQAPPGGFSGPESNGYDNLASAIGAPVTLNGQKAYGVFVSPGTGYRNNAASGTAKGDAAEGMYAVLDGTHYNGACCFDYGNAETNSRDTGNGHMEAIYFGDSTVWGTGSGKGPWIMADLENGLFSGSSPGNNAGDPSISYRFVTAAIKGQPNQWAIRGGNAASGSLSTFYSGARPQVSGYNPMSKEGAIILGIGGDNSNGAQGTFYEGVMTSGYPSDATENSVQANIVAARYAVAPLTSGPALTVGSSISLRATTACCTTRYIAHSGSTVNTQVVSSSSATALKQQASWTVRAGLANNACFSFESRDTSGSYIRHSNFGLVLNANDGSKLFAEDATFCTQAGINGQGSSIRSWSYPTRYFRHYNNTLYIASNGGVHVFDATAAFNDDVSFVVSGGFA.

The first 21 residues, 1 to 21, serve as a signal peptide directing secretion; sequence MLSNARIIAAGCIAAGSLVAA. N-linked (GlcNAc...) asparagine glycosylation occurs at N467.

This sequence belongs to the glycosyl hydrolase 54 family.

The catalysed reaction is Hydrolysis of terminal non-reducing alpha-L-arabinofuranoside residues in alpha-L-arabinosides.. It participates in glycan metabolism; L-arabinan degradation. The chain is Alpha-L-arabinofuranosidase (abf1) from Hypocrea jecorina (Trichoderma reesei).